Consider the following 148-residue polypeptide: UPF0756 membrane protein YeaL (148 aa).

4 consecutive transmembrane segments (helical) span residues 14–34 (ALGFISHNTTVAVSILVLIIV), 51–71 (LSIGIIILTIGIMAPIASGTL), 86–106 (LVAIAVGVIVSWLGGRGVTLM), and 121–141 (VLGVALFRGVPVGPLIAAGLV).

It belongs to the UPF0756 family.

It localises to the cell membrane. The sequence is that of UPF0756 membrane protein YeaL from Escherichia coli O127:H6 (strain E2348/69 / EPEC).